Here is a 170-residue protein sequence, read N- to C-terminus: Ribosome maturation factor RimM (170 aa).

The 74-residue stretch at 97 to 170 folds into the PRC barrel domain; it reads KPDEYYWVDL…LVVVDWDPEF (74 aa).

This sequence belongs to the RimM family. Binds ribosomal protein uS19.

Its subcellular location is the cytoplasm. An accessory protein needed during the final step in the assembly of 30S ribosomal subunit, possibly for assembly of the head region. Essential for efficient processing of 16S rRNA. May be needed both before and after RbfA during the maturation of 16S rRNA. It has affinity for free ribosomal 30S subunits but not for 70S ribosomes. The polypeptide is Ribosome maturation factor RimM (Stenotrophomonas maltophilia (strain K279a)).